A 549-amino-acid chain; its full sequence is MQNINPTSTAAWKALEAHKGTLENTTINDLFQQEKNRFADYSLTFNNEILVDFSKNKITRETLNLLRRLAKECALDEAKEAMFSGEKINRTENRAVLHTALRNRSNTAVLVDGKDVMPEVNEVLAKMKAFSERVISGEWKGYTGKAITDVVNIGIGGSDLGPYMVTEALRPYKNHLNMHFVSNVDGTHIAEVFKKTNPETTLFLVASKTFTTQETMTNAKSARDWFLATAKDEKHVAKHFAALSTNAAEVEKFGIDTDNMFGFWDWVGGRYSLWSAIGLSIILSVGFENFEALLSGAHEMDKHFRNTPIEQNIPATLALVGLWNTNFQGAQTEAILPYDQYMHRFAAYFQQGNMESNGKYVGRDGKVISNYQTGPIIWGEPGTNGQHAFYQLIHQGTTLIPCDFIAPAKTHNPLADHHNKLLSNFFAQTEALAFGKTKETVEAEFLKAGKSLDEVKDVVPFKVFAGNKPTNSILLQEITPFSLGALIAMYEHKIFVQGVIFNIFSFDQWGVELGKQLANRILPELSGDEQVTGHDSSTNGLINQFKAWR.

E355 (proton donor) is an active-site residue. Active-site residues include H387 and K515.

The protein belongs to the GPI family.

The protein localises to the cytoplasm. It catalyses the reaction alpha-D-glucose 6-phosphate = beta-D-fructose 6-phosphate. It participates in carbohydrate biosynthesis; gluconeogenesis. Its pathway is carbohydrate degradation; glycolysis; D-glyceraldehyde 3-phosphate and glycerone phosphate from D-glucose: step 2/4. Functionally, catalyzes the reversible isomerization of glucose-6-phosphate to fructose-6-phosphate. The sequence is that of Glucose-6-phosphate isomerase from Mannheimia succiniciproducens (strain KCTC 0769BP / MBEL55E).